A 471-amino-acid polypeptide reads, in one-letter code: T-box transcription factor T (471 aa).

Positions 24–196 form a DNA-binding region, T-box; that stretch reads LWTKFCSLTN…HNPFAKAFLD (173 aa).

In terms of tissue distribution, developing notochord.

It is found in the nucleus. Functionally, involved in the transcriptional regulation of genes required for mesoderm differentiation. The polypeptide is T-box transcription factor T (Halocynthia roretzi (Sea squirt)).